The chain runs to 163 residues: Transcriptional repressor NrdR (163 aa).

A zinc finger spans residues 3 to 34 (CPFCAHPEDKVVDSRESKEGESIRRRRECLKC). The 91-residue stretch at 49-139 (YMVVKKDGRR…VYLDFKDVRE (91 aa)) folds into the ATP-cone domain.

This sequence belongs to the NrdR family. Zn(2+) serves as cofactor.

Its function is as follows. Negatively regulates transcription of bacterial ribonucleotide reductase nrd genes and operons by binding to NrdR-boxes. The sequence is that of Transcriptional repressor NrdR from Koribacter versatilis (strain Ellin345).